We begin with the raw amino-acid sequence, 411 residues long: Methylthioribose-1-phosphate isomerase (411 aa).

Catalysis depends on Asp-284, which acts as the Proton donor.

It belongs to the eIF-2B alpha/beta/delta subunits family. MtnA subfamily.

It is found in the cytoplasm. Its subcellular location is the nucleus. It catalyses the reaction 5-(methylsulfanyl)-alpha-D-ribose 1-phosphate = 5-(methylsulfanyl)-D-ribulose 1-phosphate. Its pathway is amino-acid biosynthesis; L-methionine biosynthesis via salvage pathway; L-methionine from S-methyl-5-thio-alpha-D-ribose 1-phosphate: step 1/6. Its function is as follows. Catalyzes the interconversion of methylthioribose-1-phosphate (MTR-1-P) into methylthioribulose-1-phosphate (MTRu-1-P). The chain is Methylthioribose-1-phosphate isomerase from Komagataella phaffii (strain GS115 / ATCC 20864) (Yeast).